A 542-amino-acid polypeptide reads, in one-letter code: ATP synthase subunit alpha (542 aa).

173-180 (GDRQTGKT) is an ATP binding site. The disordered stretch occupies residues 518–542 (PLVEKKPDEKHTTPVEQEKIVAGEK). The span at 519–542 (LVEKKPDEKHTTPVEQEKIVAGEK) shows a compositional bias: basic and acidic residues.

It belongs to the ATPase alpha/beta chains family. F-type ATPases have 2 components, CF(1) - the catalytic core - and CF(0) - the membrane proton channel. CF(1) has five subunits: alpha(3), beta(3), gamma(1), delta(1), epsilon(1). CF(0) has three main subunits: a(1), b(2) and c(9-12). The alpha and beta chains form an alternating ring which encloses part of the gamma chain. CF(1) is attached to CF(0) by a central stalk formed by the gamma and epsilon chains, while a peripheral stalk is formed by the delta and b chains.

It localises to the cell membrane. It catalyses the reaction ATP + H2O + 4 H(+)(in) = ADP + phosphate + 5 H(+)(out). Produces ATP from ADP in the presence of a proton gradient across the membrane. The alpha chain is a regulatory subunit. This Bifidobacterium adolescentis (strain ATCC 15703 / DSM 20083 / NCTC 11814 / E194a) protein is ATP synthase subunit alpha.